We begin with the raw amino-acid sequence, 51 residues long: Ribosome biogenesis protein Nop10 (51 aa).

It belongs to the NOP10 family.

In terms of biological role, involved in ribosome biogenesis; more specifically in 18S rRNA pseudouridylation and in cleavage of pre-rRNA. This is Ribosome biogenesis protein Nop10 from Methanococcus maripaludis (strain C5 / ATCC BAA-1333).